The sequence spans 263 residues: Diphthine synthase (263 aa).

Residues leucine 11, aspartate 89, alanine 92, 117-118 (SV), leucine 166, and leucine 208 contribute to the S-adenosyl-L-methionine site.

It belongs to the diphthine synthase family. In terms of assembly, homodimer.

The catalysed reaction is 2-[(3S)-amino-3-carboxypropyl]-L-histidyl-[translation elongation factor 2] + 3 S-adenosyl-L-methionine = diphthine-[translation elongation factor 2] + 3 S-adenosyl-L-homocysteine + 3 H(+). Its pathway is protein modification; peptidyl-diphthamide biosynthesis. Its function is as follows. S-adenosyl-L-methionine-dependent methyltransferase that catalyzes the trimethylation of the amino group of the modified target histidine residue in translation elongation factor 2 (EF-2), to form an intermediate called diphthine. The three successive methylation reactions represent the second step of diphthamide biosynthesis. This chain is Diphthine synthase, found in Methanopyrus kandleri (strain AV19 / DSM 6324 / JCM 9639 / NBRC 100938).